Here is a 376-residue protein sequence, read N- to C-terminus: N-acetyldiaminopimelate deacetylase (376 aa).

D69 is a catalytic residue. E128 acts as the Proton acceptor in catalysis.

This sequence belongs to the peptidase M20A family. N-acetyldiaminopimelate deacetylase subfamily.

The enzyme catalyses N-acetyl-(2S,6S)-2,6-diaminopimelate + H2O = (2S,6S)-2,6-diaminopimelate + acetate. The protein operates within amino-acid biosynthesis; L-lysine biosynthesis via DAP pathway; LL-2,6-diaminopimelate from (S)-tetrahydrodipicolinate (acetylase route): step 3/3. In terms of biological role, catalyzes the conversion of N-acetyl-diaminopimelate to diaminopimelate and acetate. The polypeptide is N-acetyldiaminopimelate deacetylase (Bacillus cereus (strain G9842)).